The chain runs to 370 residues: NSFL1 cofactor p47 (370 aa).

Residues 54 to 73 are compositionally biased toward polar residues; the sequence is SQATPSSVSRGTAPSDNRVT. The tract at residues 54–116 is disordered; the sequence is SQATPSSVSR…VGPPRKKSPN (63 aa). S74, S102, S114, and S140 each carry phosphoserine. The Nuclear localization signal signature appears at 109–115; it reads PPRKKSP. Y167 is modified (phosphotyrosine). The short motif at 172 to 175 is the Nuclear localization signal element; the sequence is KRQH. Phosphoserine occurs at positions 176, 192, and 272. The region spanning 179–244 is the SEP domain; it reads DVHVVLKLWK…MEDHRDEDFV (66 aa). A compositionally biased stretch (polar residues) spans 261-287; that stretch reads GSTAPQVLSTSSPAQQAENEAKASSSI. The disordered stretch occupies residues 261 to 289; that stretch reads GSTAPQVLSTSSPAQQAENEAKASSSILI. A UBX domain is found at 291 to 368; the sequence is ESEPTTNIQI…NLLNAVIVQR (78 aa).

Belongs to the NSFL1C family. As to quaternary structure, part of a ternary complex containing STX5A, NSFL1C and VCP. NSFL1C forms a homotrimer that binds to one end of a VCP homohexamer. The complex binds to membranes enriched in phosphatidylethanolamine-containing lipids and promotes Golgi membrane fusion. Interaction with VCIP135 leads to dissociation of the complex via ATP hydrolysis by VCP. Binds ubiquitin and mono-ubiquitinated proteins via its N-terminal UBA-like domain when bound to VCP. In terms of processing, phosphorylated during mitosis. Phosphorylation inhibits interaction with Golgi membranes and is required for the fragmentation of the Golgi stacks during mitosis.

The protein resides in the nucleus. The protein localises to the golgi apparatus. It is found in the golgi stack. Its subcellular location is the chromosome. It localises to the cytoplasm. The protein resides in the cytoskeleton. The protein localises to the microtubule organizing center. It is found in the centrosome. In terms of biological role, reduces the ATPase activity of VCP. Necessary for the fragmentation of Golgi stacks during mitosis and for VCP-mediated reassembly of Golgi stacks after mitosis. May play a role in VCP-mediated formation of transitional endoplasmic reticulum (tER). Inhibits the activity of CTSL (in vitro). Together with UBXN2B/p37, regulates the centrosomal levels of kinase AURKA/Aurora A during mitotic progression by promoting AURKA removal from centrosomes in prophase. Also, regulates spindle orientation during mitosis. The chain is NSFL1 cofactor p47 (NSFL1C) from Homo sapiens (Human).